Here is a 337-residue protein sequence, read N- to C-terminus: Pentalenene synthase (337 aa).

Residues Asp-80, Asp-84, Asn-219, Ser-223, and Glu-227 each coordinate Mg(2+). The DDXXD motif signature appears at 80 to 84; that stretch reads DDLFD.

Belongs to the terpene synthase family. As to quaternary structure, monomer. Mg(2+) serves as cofactor.

The catalysed reaction is (2E,6E)-farnesyl diphosphate = pentalenene + diphosphate. Its pathway is sesquiterpene biosynthesis; pentalenene biosynthesis; pentalenene from farnesyl diphosphate: step 1/1. It functions in the pathway antibiotic biosynthesis; pentalenolactone biosynthesis. In terms of biological role, catalyzes the cyclization of farnesyl diphosphate (FPP) to the tricyclic sesquiterpene pentalenene, which is the hydrocarbon precursor of the pentalenolactone family of antibiotics produced by a variety of Streptomyces species. The chain is Pentalenene synthase (pntA) from Streptomyces arenae.